We begin with the raw amino-acid sequence, 165 residues long: Nucleotide-binding protein NATL1_05371 (165 aa).

This sequence belongs to the YajQ family.

In terms of biological role, nucleotide-binding protein. The chain is Nucleotide-binding protein NATL1_05371 from Prochlorococcus marinus (strain NATL1A).